Here is a 324-residue protein sequence, read N- to C-terminus: Glyoxylate/hydroxypyruvate reductase B (324 aa).

Active-site residues include Arg237 and Glu266. Catalysis depends on His285, which acts as the Proton donor.

It belongs to the D-isomer specific 2-hydroxyacid dehydrogenase family. GhrB subfamily. Homodimer.

The protein resides in the cytoplasm. The enzyme catalyses glycolate + NADP(+) = glyoxylate + NADPH + H(+). It catalyses the reaction (R)-glycerate + NAD(+) = 3-hydroxypyruvate + NADH + H(+). The catalysed reaction is (R)-glycerate + NADP(+) = 3-hydroxypyruvate + NADPH + H(+). Functionally, catalyzes the NADPH-dependent reduction of glyoxylate and hydroxypyruvate into glycolate and glycerate, respectively. This chain is Glyoxylate/hydroxypyruvate reductase B, found in Shigella boydii serotype 18 (strain CDC 3083-94 / BS512).